The primary structure comprises 369 residues: 3-dehydroquinate synthase (369 aa).

Residues 75-80, 109-113, 133-134, K146, K155, and 173-176 each bind NAD(+); these read DGEEHK, GVIGD, TT, and TLKT. Zn(2+) is bound by residues E188, H251, and H268.

The protein belongs to the sugar phosphate cyclases superfamily. Dehydroquinate synthase family. Co(2+) serves as cofactor. It depends on Zn(2+) as a cofactor. The cofactor is NAD(+).

Its subcellular location is the cytoplasm. The catalysed reaction is 7-phospho-2-dehydro-3-deoxy-D-arabino-heptonate = 3-dehydroquinate + phosphate. It functions in the pathway metabolic intermediate biosynthesis; chorismate biosynthesis; chorismate from D-erythrose 4-phosphate and phosphoenolpyruvate: step 2/7. Functionally, catalyzes the conversion of 3-deoxy-D-arabino-heptulosonate 7-phosphate (DAHP) to dehydroquinate (DHQ). The protein is 3-dehydroquinate synthase of Legionella pneumophila subsp. pneumophila (strain Philadelphia 1 / ATCC 33152 / DSM 7513).